A 192-amino-acid chain; its full sequence is Xanthine phosphoribosyltransferase (192 aa).

Residues leucine 20 and asparagine 27 each coordinate xanthine. Residue 128–132 participates in 5-phospho-alpha-D-ribose 1-diphosphate binding; it reads ANGDA. Lysine 156 is a binding site for xanthine.

This sequence belongs to the purine/pyrimidine phosphoribosyltransferase family. Xpt subfamily. As to quaternary structure, homodimer.

The protein resides in the cytoplasm. It catalyses the reaction XMP + diphosphate = xanthine + 5-phospho-alpha-D-ribose 1-diphosphate. It participates in purine metabolism; XMP biosynthesis via salvage pathway; XMP from xanthine: step 1/1. In terms of biological role, converts the preformed base xanthine, a product of nucleic acid breakdown, to xanthosine 5'-monophosphate (XMP), so it can be reused for RNA or DNA synthesis. This is Xanthine phosphoribosyltransferase from Staphylococcus carnosus (strain TM300).